We begin with the raw amino-acid sequence, 94 residues long: Phosphoribosyl-ATP pyrophosphatase (94 aa).

Belongs to the PRA-PH family.

Its subcellular location is the cytoplasm. It carries out the reaction 1-(5-phospho-beta-D-ribosyl)-ATP + H2O = 1-(5-phospho-beta-D-ribosyl)-5'-AMP + diphosphate + H(+). It functions in the pathway amino-acid biosynthesis; L-histidine biosynthesis; L-histidine from 5-phospho-alpha-D-ribose 1-diphosphate: step 2/9. This chain is Phosphoribosyl-ATP pyrophosphatase, found in Pyrobaculum arsenaticum (strain DSM 13514 / JCM 11321 / PZ6).